Here is a 427-residue protein sequence, read N- to C-terminus: Enolase (427 aa).

Position 163 (glutamine 163) interacts with (2R)-2-phosphoglycerate. Glutamate 205 acts as the Proton donor in catalysis. Positions 242, 285, and 312 each coordinate Mg(2+). Positions 337, 366, 367, and 388 each coordinate (2R)-2-phosphoglycerate. Catalysis depends on lysine 337, which acts as the Proton acceptor.

It belongs to the enolase family. Mg(2+) is required as a cofactor.

Its subcellular location is the cytoplasm. The protein resides in the secreted. It is found in the cell surface. The enzyme catalyses (2R)-2-phosphoglycerate = phosphoenolpyruvate + H2O. It participates in carbohydrate degradation; glycolysis; pyruvate from D-glyceraldehyde 3-phosphate: step 4/5. In terms of biological role, catalyzes the reversible conversion of 2-phosphoglycerate (2-PG) into phosphoenolpyruvate (PEP). It is essential for the degradation of carbohydrates via glycolysis. The chain is Enolase from Burkholderia orbicola (strain MC0-3).